The chain runs to 250 residues: Type-1Ab cytolytic delta-endotoxin (250 aa).

The protein belongs to the cyt1/cyt2 endotoxin family. Post-translationally, active after proteolytic processing.

Its function is as follows. Kills the larvae of dipteran insects by making pores in the epithelial cell membrane of the insect midgut. This chain is Type-1Ab cytolytic delta-endotoxin (cyt1Ab1), found in Bacillus thuringiensis subsp. medellin.